The following is a 554-amino-acid chain: Glucose-6-phosphate isomerase (554 aa).

Catalysis depends on glutamate 359, which acts as the Proton donor. Active-site residues include histidine 390 and lysine 518.

This sequence belongs to the GPI family.

The protein localises to the cytoplasm. The enzyme catalyses alpha-D-glucose 6-phosphate = beta-D-fructose 6-phosphate. It participates in carbohydrate biosynthesis; gluconeogenesis. Its pathway is carbohydrate degradation; glycolysis; D-glyceraldehyde 3-phosphate and glycerone phosphate from D-glucose: step 2/4. Its function is as follows. Catalyzes the reversible isomerization of glucose-6-phosphate to fructose-6-phosphate. In Pseudomonas syringae pv. syringae (strain B728a), this protein is Glucose-6-phosphate isomerase.